Here is a 308-residue protein sequence, read N- to C-terminus: HPr kinase/phosphorylase (308 aa).

Residues His-141 and Lys-162 contribute to the active site. 156–163 (GKSGVGKS) is a binding site for ATP. Ser-163 lines the Mg(2+) pocket. Asp-180 serves as the catalytic Proton acceptor; for phosphorylation activity. Proton donor; for dephosphorylation activity. The important for the catalytic mechanism of both phosphorylation and dephosphorylation stretch occupies residues 204-213 (MEIRGVGILD). Glu-205 lines the Mg(2+) pocket. The active site involves Arg-246. The important for the catalytic mechanism of dephosphorylation stretch occupies residues 267–272 (PVKPGR).

This sequence belongs to the HPrK/P family. As to quaternary structure, homohexamer. Requires Mg(2+) as cofactor.

The catalysed reaction is [HPr protein]-L-serine + ATP = [HPr protein]-O-phospho-L-serine + ADP + H(+). The enzyme catalyses [HPr protein]-O-phospho-L-serine + phosphate + H(+) = [HPr protein]-L-serine + diphosphate. Functionally, catalyzes the ATP- as well as the pyrophosphate-dependent phosphorylation of a specific serine residue in HPr, a phosphocarrier protein of the phosphoenolpyruvate-dependent sugar phosphotransferase system (PTS). HprK/P also catalyzes the pyrophosphate-producing, inorganic phosphate-dependent dephosphorylation (phosphorolysis) of seryl-phosphorylated HPr (P-Ser-HPr). The two antagonistic activities of HprK/P are regulated by several intracellular metabolites, which change their concentration in response to the absence or presence of rapidly metabolisable carbon sources (glucose, fructose, etc.) in the growth medium. Therefore, by controlling the phosphorylation state of HPr, HPrK/P is a sensor enzyme that plays a major role in the regulation of carbon metabolism and sugar transport: it mediates carbon catabolite repression (CCR), and regulates PTS-catalyzed carbohydrate uptake and inducer exclusion. The protein is HPr kinase/phosphorylase of Peptoclostridium acidaminophilum (Eubacterium acidaminophilum).